The primary structure comprises 407 residues: Substance-P receptor (407 aa).

The Extracellular segment spans residues 1-31 (MDNVLPGDSDLFPNISTNSSESNQFVQPAWQ). 2 N-linked (GlcNAc...) asparagine glycosylation sites follow: asparagine 14 and asparagine 18. The helical transmembrane segment at 32–54 (IVLWAAAYTVIVVTSVVGNVVVM) threads the bilayer. At 55 to 64 (WIILAHKRMR) the chain is on the cytoplasmic side. Residues 65 to 86 (TVTNYFLVNLAFAEASMAAFNT) form a helical membrane-spanning segment. Topologically, residues 87 to 106 (VVNFTYAVHNEWYYGLFYCK) are extracellular. Asparagine 89 carries N-linked (GlcNAc...) asparagine glycosylation. Cysteine 105 and cysteine 180 are joined by a disulfide. The chain crosses the membrane as a helical span at residues 107–128 (FHNFFPIAAVFASIYSMTAVAF). The Cytoplasmic segment spans residues 129–148 (DRYMAIIHPLQPRLSATATK). The helical transmembrane segment at 149–169 (VVIFVIWVLALLLAFPQGYYS) threads the bilayer. At 170–194 (TTETMPGRVVCMIEWPEHPNRTYEK) the chain is on the extracellular side. Asparagine 189 carries an N-linked (GlcNAc...) asparagine glycan. A helical transmembrane segment spans residues 195 to 219 (AYHICVTVLIYFLPLLVIGYAYTVV). Residues 220-248 (GITLWASEIPGDSSDRYHEQVSAKRKVVK) lie on the Cytoplasmic side of the membrane. The chain crosses the membrane as a helical span at residues 249–270 (MMIVVVCTFAICWLPFHVFFLL). Topologically, residues 271 to 283 (PYINPDLYVKKFI) are extracellular. The chain crosses the membrane as a helical span at residues 284-308 (QQVYLAIMWLAMSSTMYNPIIYCCL). Residues 309–407 (NDRFRLGFKH…SSSFYSNMLA (99 aa)) lie on the Cytoplasmic side of the membrane. The S-palmitoyl cysteine moiety is linked to residue cysteine 322. Positions 365–407 (HEDEAEEGPKATPSSLDLTSNGSSRSNSKTMTESSSFYSNMLA) are disordered. The span at 376-407 (TPSSLDLTSNGSSRSNSKTMTESSSFYSNMLA) shows a compositional bias: polar residues.

The protein belongs to the G-protein coupled receptor 1 family. Interacts with ARRB1.

The protein localises to the cell membrane. In terms of biological role, this is a receptor for the tachykinin neuropeptide substance P. It is probably associated with G proteins that activate a phosphatidylinositol-calcium second messenger system. The protein is Substance-P receptor (TACR1) of Meriones unguiculatus (Mongolian jird).